A 359-amino-acid polypeptide reads, in one-letter code: Fructose-bisphosphate aldolase (359 aa).

D-glyceraldehyde 3-phosphate is bound at residue serine 50. The active-site Proton donor is the aspartate 83. Zn(2+) is bound by residues histidine 84, aspartate 105, glutamate 142, and histidine 198. Glycine 199 provides a ligand contact to dihydroxyacetone phosphate. Histidine 232 is a Zn(2+) binding site. Dihydroxyacetone phosphate is bound by residues 233–235 (GSS) and 275–278 (NIDT).

This sequence belongs to the class II fructose-bisphosphate aldolase family. It depends on Zn(2+) as a cofactor.

The catalysed reaction is beta-D-fructose 1,6-bisphosphate = D-glyceraldehyde 3-phosphate + dihydroxyacetone phosphate. Its pathway is carbohydrate degradation; glycolysis; D-glyceraldehyde 3-phosphate and glycerone phosphate from D-glucose: step 4/4. Catalyzes the aldol condensation of dihydroxyacetone phosphate (DHAP or glycerone-phosphate) with glyceraldehyde 3-phosphate (G3P) to form fructose 1,6-bisphosphate (FBP) in gluconeogenesis and the reverse reaction in glycolysis. In Nostoc commune, this protein is Fructose-bisphosphate aldolase (fba).